The chain runs to 380 residues: O-phospho-L-seryl-tRNA:Cys-tRNA synthase (380 aa).

Pyridoxal 5'-phosphate-binding positions include 86 to 87 (AR), Asn-192, and 215 to 217 (SGH). Residue Lys-218 is modified to N6-(pyridoxal phosphate)lysine.

This sequence belongs to the SepCysS family. In terms of assembly, homodimer. Interacts with SepRS. The cofactor is pyridoxal 5'-phosphate.

The enzyme catalyses O-phospho-L-seryl-tRNA(Cys) + hydrogen sulfide + H(+) = L-cysteinyl-tRNA(Cys) + phosphate. Functionally, converts O-phospho-L-seryl-tRNA(Cys) (Sep-tRNA(Cys)) to L-cysteinyl-tRNA(Cys) (Cys-tRNA(Cys)). This Methanococcus maripaludis (strain C6 / ATCC BAA-1332) protein is O-phospho-L-seryl-tRNA:Cys-tRNA synthase.